The chain runs to 147 residues: Cyanate hydratase (147 aa).

Active-site residues include Arg-88, Glu-91, and Ser-114.

The protein belongs to the cyanase family.

The catalysed reaction is cyanate + hydrogencarbonate + 3 H(+) = NH4(+) + 2 CO2. Functionally, catalyzes the reaction of cyanate with bicarbonate to produce ammonia and carbon dioxide. The protein is Cyanate hydratase of Polaromonas sp. (strain JS666 / ATCC BAA-500).